The following is a 160-amino-acid chain: Small ribosomal subunit protein uS9 (160 aa).

It belongs to the universal ribosomal protein uS9 family.

The protein is Small ribosomal subunit protein uS9 of Cereibacter sphaeroides (strain ATCC 17029 / ATH 2.4.9) (Rhodobacter sphaeroides).